A 217-amino-acid polypeptide reads, in one-letter code: ATP-dependent Clp protease proteolytic subunit 2 (217 aa).

Serine 113 serves as the catalytic Nucleophile. The active site involves histidine 138.

It belongs to the peptidase S14 family. As to quaternary structure, fourteen ClpP subunits assemble into 2 heptameric rings which stack back to back to give a disk-like structure with a central cavity, resembling the structure of eukaryotic proteasomes.

The protein resides in the cytoplasm. The enzyme catalyses Hydrolysis of proteins to small peptides in the presence of ATP and magnesium. alpha-casein is the usual test substrate. In the absence of ATP, only oligopeptides shorter than five residues are hydrolyzed (such as succinyl-Leu-Tyr-|-NHMec, and Leu-Tyr-Leu-|-Tyr-Trp, in which cleavage of the -Tyr-|-Leu- and -Tyr-|-Trp bonds also occurs).. In terms of biological role, cleaves peptides in various proteins in a process that requires ATP hydrolysis. Has a chymotrypsin-like activity. Plays a major role in the degradation of misfolded proteins. The sequence is that of ATP-dependent Clp protease proteolytic subunit 2 from Frankia casuarinae (strain DSM 45818 / CECT 9043 / HFP020203 / CcI3).